A 202-amino-acid polypeptide reads, in one-letter code: Elongation factor Ts, chloroplastic (202 aa).

Belongs to the EF-Ts family.

The protein resides in the plastid. The protein localises to the chloroplast. Its function is as follows. Associates with the EF-Tu.GDP complex and induces the exchange of GDP to GTP. It remains bound to the aminoacyl-tRNA.EF-Tu.GTP complex up to the GTP hydrolysis stage on the ribosome. This Phaeodactylum tricornutum (strain CCAP 1055/1) protein is Elongation factor Ts, chloroplastic (tsf).